Here is a 318-residue protein sequence, read N- to C-terminus: NADH-ubiquinone oxidoreductase chain 1 (318 aa).

Transmembrane regions (helical) follow at residues 2–22 (FLMNMLCLIIPILLAMAFLTL), 37–57 (PNIVGPYGLLQPIADAIKLFI), 69–89 (LMFTLAPMLAFSLALSMWIPM), 100–120 (LGVLFILALSSLAVYSILWSG), 136–156 (VAQTISYEVTLAIILLSTMMM), 171–191 (HMWLIFPLWPLAMMWFISTLA), 206–226 (ELVSGFNVEYAAGPFALFFMA), 253–273 (ELFTANFVTKTLALTMAFLWI), and 294–314 (LPLTLALCMLHVSLPTVSAGI).

Belongs to the complex I subunit 1 family.

The protein localises to the mitochondrion inner membrane. It catalyses the reaction a ubiquinone + NADH + 5 H(+)(in) = a ubiquinol + NAD(+) + 4 H(+)(out). Its function is as follows. Core subunit of the mitochondrial membrane respiratory chain NADH dehydrogenase (Complex I) that is believed to belong to the minimal assembly required for catalysis. Complex I functions in the transfer of electrons from NADH to the respiratory chain. The immediate electron acceptor for the enzyme is believed to be ubiquinone. The chain is NADH-ubiquinone oxidoreductase chain 1 (MT-ND1) from Tolypeutes matacus (Southern three-banded armadillo).